A 147-amino-acid polypeptide reads, in one-letter code: Hemoglobin subunit gamma-2 (147 aa).

The region spanning 3–147 is the Globin domain; that stretch reads NFTAEDKAAI…VASALGSRYH (145 aa). Phosphothreonine is present on Thr-13. Ser-45, Ser-51, and Ser-53 each carry phosphoserine. The residue at position 60 (Lys-60) is an N6-acetyllysine. Residue His-64 participates in heme b binding. An N6-acetyllysine modification is found at Lys-83. Residue His-93 coordinates heme b. At Cys-94 the chain carries S-nitrosocysteine. 2 positions are modified to phosphoserine: Ser-140 and Ser-144.

It belongs to the globin family. Heterotetramer of two alpha chains and two gamma chains in fetal hemoglobin (Hb F). Red blood cells.

Gamma chains make up the fetal hemoglobin F, in combination with alpha chains. In Cebus albifrons (White-fronted capuchin), this protein is Hemoglobin subunit gamma-2 (HBG2).